The chain runs to 180 residues: Oligoribonuclease (180 aa).

The Exonuclease domain occupies 7 to 170 (LIWIDLEMTG…SDIQDSIDEL (164 aa)). The active site involves Y128.

The protein belongs to the oligoribonuclease family.

The protein resides in the cytoplasm. Functionally, 3'-to-5' exoribonuclease specific for small oligoribonucleotides. This chain is Oligoribonuclease, found in Ruthia magnifica subsp. Calyptogena magnifica.